The following is a 205-amino-acid chain: Thiamine-phosphate synthase (205 aa).

4-amino-2-methyl-5-(diphosphooxymethyl)pyrimidine contacts are provided by residues 35–39 (QYRDK) and asparagine 67. The Mg(2+) site is built by aspartate 68 and aspartate 86. Position 105 (threonine 105) interacts with 4-amino-2-methyl-5-(diphosphooxymethyl)pyrimidine. Residue 132–134 (SQT) coordinates 2-[(2R,5Z)-2-carboxy-4-methylthiazol-5(2H)-ylidene]ethyl phosphate. Lysine 135 contributes to the 4-amino-2-methyl-5-(diphosphooxymethyl)pyrimidine binding site. Position 162 (glycine 162) interacts with 2-[(2R,5Z)-2-carboxy-4-methylthiazol-5(2H)-ylidene]ethyl phosphate.

The protein belongs to the thiamine-phosphate synthase family. The cofactor is Mg(2+).

The catalysed reaction is 2-[(2R,5Z)-2-carboxy-4-methylthiazol-5(2H)-ylidene]ethyl phosphate + 4-amino-2-methyl-5-(diphosphooxymethyl)pyrimidine + 2 H(+) = thiamine phosphate + CO2 + diphosphate. It carries out the reaction 2-(2-carboxy-4-methylthiazol-5-yl)ethyl phosphate + 4-amino-2-methyl-5-(diphosphooxymethyl)pyrimidine + 2 H(+) = thiamine phosphate + CO2 + diphosphate. The enzyme catalyses 4-methyl-5-(2-phosphooxyethyl)-thiazole + 4-amino-2-methyl-5-(diphosphooxymethyl)pyrimidine + H(+) = thiamine phosphate + diphosphate. The protein operates within cofactor biosynthesis; thiamine diphosphate biosynthesis; thiamine phosphate from 4-amino-2-methyl-5-diphosphomethylpyrimidine and 4-methyl-5-(2-phosphoethyl)-thiazole: step 1/1. Condenses 4-methyl-5-(beta-hydroxyethyl)thiazole monophosphate (THZ-P) and 2-methyl-4-amino-5-hydroxymethyl pyrimidine pyrophosphate (HMP-PP) to form thiamine monophosphate (TMP). The sequence is that of Thiamine-phosphate synthase from Pseudomonas syringae pv. tomato (strain ATCC BAA-871 / DC3000).